The sequence spans 286 residues: Ribosomal RNA small subunit methyltransferase A (286 aa).

Residues Asn31, Ile33, Gly58, Glu80, Asp106, and Asn125 each contribute to the S-adenosyl-L-methionine site.

Belongs to the class I-like SAM-binding methyltransferase superfamily. rRNA adenine N(6)-methyltransferase family. RsmA subfamily.

The protein localises to the cytoplasm. The enzyme catalyses adenosine(1518)/adenosine(1519) in 16S rRNA + 4 S-adenosyl-L-methionine = N(6)-dimethyladenosine(1518)/N(6)-dimethyladenosine(1519) in 16S rRNA + 4 S-adenosyl-L-homocysteine + 4 H(+). In terms of biological role, specifically dimethylates two adjacent adenosines (A1518 and A1519) in the loop of a conserved hairpin near the 3'-end of 16S rRNA in the 30S particle. May play a critical role in biogenesis of 30S subunits. This Wolbachia pipientis wMel protein is Ribosomal RNA small subunit methyltransferase A.